The primary structure comprises 254 residues: Anamorsin homolog (254 aa).

An N-terminal SAM-like domain region spans residues 4–133; it reads VQENNHVLYL…EVGSKSKLSF (130 aa). The segment at 134 to 165 is linker; it reads AKKSNVAAVWKLDDNEEEERIDDEELLDEDDK. [2Fe-2S] cluster contacts are provided by Cys-176, Cys-185, Cys-188, and Cys-190. The fe-S binding site A stretch occupies residues 176–190; that stretch reads CGTTGKRKACKDCSC. 4 residues coordinate [4Fe-4S] cluster: Cys-215, Cys-218, Cys-226, and Cys-229. Short sequence motifs (cx2C motif) lie at residues 215-218 and 226-229; these read CGSC and CATC. A fe-S binding site B region spans residues 215–229; the sequence is CGSCYLGDAFRCATC.

The protein belongs to the anamorsin family. Monomer. Requires [2Fe-2S] cluster as cofactor. The cofactor is [4Fe-4S] cluster.

Its subcellular location is the cytoplasm. The protein resides in the mitochondrion intermembrane space. Its function is as follows. Component of the cytosolic iron-sulfur (Fe-S) protein assembly (CIA) machinery. Required for the maturation of extramitochondrial Fe-S proteins. Part of an electron transfer chain functioning in an early step of cytosolic Fe-S biogenesis, facilitating the de novo assembly of a [4Fe-4S] cluster on the cytosolic Fe-S scaffold complex. Electrons are transferred from NADPH via a FAD- and FMN-containing diflavin oxidoreductase. Together with the diflavin oxidoreductase, also required for the assembly of the diferric tyrosyl radical cofactor of ribonucleotide reductase (RNR), probably by providing electrons for reduction during radical cofactor maturation in the catalytic small subunit. The chain is Anamorsin homolog from Anopheles gambiae (African malaria mosquito).